Reading from the N-terminus, the 33-residue chain is Potassium channel toxin alpha-KTx 10.4 (33 aa).

3 disulfide bridges follow: Cys3–Cys22, Cys8–Cys27, and Cys12–Cys29.

Belongs to the short scorpion toxin superfamily. Potassium channel inhibitor family. Alpha-KTx 10 subfamily. Expressed by the venom gland.

The protein resides in the secreted. Blocks human voltage-gated potassium channel Kv1.2/KCNA2 (IC(50)=3.6 nM) and Kv1.3/KCNA3 (IC(50)=72 nM). The sequence is that of Potassium channel toxin alpha-KTx 10.4 from Centruroides tecomanus (Scorpion).